Here is a 371-residue protein sequence, read N- to C-terminus: 4-hydroxy-3-methylbut-2-en-1-yl diphosphate synthase (flavodoxin) (371 aa).

Positions 270, 273, 305, and 312 each coordinate [4Fe-4S] cluster.

This sequence belongs to the IspG family. [4Fe-4S] cluster is required as a cofactor.

It catalyses the reaction (2E)-4-hydroxy-3-methylbut-2-enyl diphosphate + oxidized [flavodoxin] + H2O + 2 H(+) = 2-C-methyl-D-erythritol 2,4-cyclic diphosphate + reduced [flavodoxin]. It participates in isoprenoid biosynthesis; isopentenyl diphosphate biosynthesis via DXP pathway; isopentenyl diphosphate from 1-deoxy-D-xylulose 5-phosphate: step 5/6. Its function is as follows. Converts 2C-methyl-D-erythritol 2,4-cyclodiphosphate (ME-2,4cPP) into 1-hydroxy-2-methyl-2-(E)-butenyl 4-diphosphate. The protein is 4-hydroxy-3-methylbut-2-en-1-yl diphosphate synthase (flavodoxin) of Shewanella loihica (strain ATCC BAA-1088 / PV-4).